A 262-amino-acid chain; its full sequence is Phycoerythrobilin:ferredoxin oxidoreductase (262 aa).

Belongs to the HY2 family.

It catalyses the reaction (3Z)-phycoerythrobilin + oxidized 2[4Fe-4S]-[ferredoxin] = 15,16-dihydrobiliverdin + reduced 2[4Fe-4S]-[ferredoxin] + 2 H(+). In terms of biological role, catalyzes the two-electron reduction of the C2 and C3(1) diene system of 15,16-dihydrobiliverdin. The polypeptide is Phycoerythrobilin:ferredoxin oxidoreductase (Synechococcus sp. (strain RCC307)).